The following is a 513-amino-acid chain: Maturase K (513 aa).

This sequence belongs to the intron maturase 2 family. MatK subfamily.

It localises to the plastid. Its subcellular location is the chloroplast. Functionally, usually encoded in the trnK tRNA gene intron. Probably assists in splicing its own and other chloroplast group II introns. The polypeptide is Maturase K (Typha angustifolia (Narrow leaf cattail)).